A 140-amino-acid polypeptide reads, in one-letter code: Transcription antitermination protein NusB (140 aa).

It belongs to the NusB family.

Involved in transcription antitermination. Required for transcription of ribosomal RNA (rRNA) genes. Binds specifically to the boxA antiterminator sequence of the ribosomal RNA (rrn) operons. The polypeptide is Transcription antitermination protein NusB (Myxococcus xanthus (strain DK1622)).